A 175-amino-acid polypeptide reads, in one-letter code: tRNA-acetylating toxin 3 (175 aa).

L95, V97, G103, G105, G107, A108, D133, Q138, D141, and W142 together coordinate acetyl-CoA. Y143 is an active-site residue. 2 residues coordinate acetyl-CoA: G145 and F146.

The protein belongs to the acetyltransferase family. GNAT subfamily. Homodimer (in absence of antitoxin); has a condensed and elongated form. Forms a complex with cognate antitoxin TacA3. Forms a 4:2 antitoxin:toxin complex with cognate antitoxin TacA3. Forms a 4:4 antitoxin:toxin complex with promoter DNA, where 2 TacT3 dimers bridge 2 TacA3 dimers. Only TacA3 contacts promoter DNA in the octomeric form. TacT3 may contact DNA in the hexameric form.

It catalyses the reaction glycyl-tRNA(Gly) + acetyl-CoA = N-acetylglycyl-tRNA(Gly) + CoA + H(+). In terms of biological role, toxic component of a type II toxin-antitoxin (TA) system. Acetylates tRNA and inhibits translation. Acetylates only Gly-tRNA on all 3 Gly-tRNA(Gly) isoacceptors in situ. In vitro acetylates mainly Ile/Leu and Gly. Overexpression during the lag phase of a tacA3-tacT3 deletion strain leads to a 150-fold increase in persister cells in the presence of cefotaxime and a non-growth state in the absence of antibiotic. Persister cell formation and the growth defect are neutralized by cognate antitoxin TacA3, but not by TacA1 or TacA2. Plays a role in persister cell formation. Its function is as follows. The TacA3-TacT3 complex both represses and derepresses expression of its own operon. The hexameric 4:2 TacA3-TacT3 complex binds promoter DNA and represses its transcription; both subunits are required. The octomeric 4:4 TacA3-TacT3 complex derepresses the operon. The shift from hexameric to octomeric complex probably alters DNA-binding, leading to dissociation from the operator DNA and derepression. The chain is tRNA-acetylating toxin 3 from Salmonella typhimurium (strain 14028s / SGSC 2262).